Reading from the N-terminus, the 469-residue chain is Sulfate adenylyltransferase subunit 1 (469 aa).

Positions 22-224 (KDLMRFITCG…NMTWYPGSPL (203 aa)) constitute a tr-type G domain. The interval 31–38 (GSVDDGKS) is G1. 31-38 (GSVDDGKS) serves as a coordination point for GTP. A G2 region spans residues 89 to 93 (GITID). The segment at 110-113 (DTPG) is G3. Residues 110–114 (DTPGH) and 165–168 (NKMD) contribute to the GTP site. Residues 165–168 (NKMD) form a G4 region. A G5 region spans residues 202 to 204 (SAL).

Belongs to the TRAFAC class translation factor GTPase superfamily. Classic translation factor GTPase family. CysN/NodQ subfamily. In terms of assembly, heterodimer composed of CysD, the smaller subunit, and CysN.

The catalysed reaction is sulfate + ATP + H(+) = adenosine 5'-phosphosulfate + diphosphate. The protein operates within sulfur metabolism; hydrogen sulfide biosynthesis; sulfite from sulfate: step 1/3. Its function is as follows. With CysD forms the ATP sulfurylase (ATPS) that catalyzes the adenylation of sulfate producing adenosine 5'-phosphosulfate (APS) and diphosphate, the first enzymatic step in sulfur assimilation pathway. APS synthesis involves the formation of a high-energy phosphoric-sulfuric acid anhydride bond driven by GTP hydrolysis by CysN coupled to ATP hydrolysis by CysD. The sequence is that of Sulfate adenylyltransferase subunit 1 from Psychromonas ingrahamii (strain DSM 17664 / CCUG 51855 / 37).